A 409-amino-acid chain; its full sequence is ORC1-type DNA replication protein 1 (409 aa).

ATP-binding positions include 63–67 (TGKTA), Tyr206, and Arg218.

This sequence belongs to the CDC6/cdc18 family.

In terms of biological role, involved in regulation of DNA replication. The polypeptide is ORC1-type DNA replication protein 1 (cdc6-1) (Archaeoglobus fulgidus (strain ATCC 49558 / DSM 4304 / JCM 9628 / NBRC 100126 / VC-16)).